A 222-amino-acid chain; its full sequence is uncharacterized protein (222 aa).

One can recognise an HTH gntR-type domain in the interval 8 to 77 (AKKGQIIYRY…GNAGYFVAKN (70 aa)).

This is an uncharacterized protein from Mycoplasma pneumoniae (strain ATCC 29342 / M129 / Subtype 1) (Mycoplasmoides pneumoniae).